A 298-amino-acid chain; its full sequence is Keratin-associated protein 10-11 (298 aa).

25 tandem repeats follow at residues 26–30 (CCEPP), 36–40 (CCAPA), 57–61 (CCQAA), 79–83 (CCQQS), 89–93 (CCTSS), 99–103 (CCVPV), 104–108 (CCKTV), 109–113 (CCKPV), 114–118 (CCVPV), 119–123 (CCGAA), 126–130 (CCRQS), 136–140 (CCASS), 146–150 (CCVPV), 151–155 (CCKPV), 156–160 (CCVST), 168–172 (CCQQS), 178–182 (CCTSS), 188–192 (CCVPV), 193–197 (CCKTV), 203–207 (CCVPV), 225–229 (CCTTS), 230–234 (CCRPS), 249–253 (CCVPV), 256–260 (CCAPT), and 267–271 (CCRPA). A 25 X 5 AA repeats of C-C-X(3) region spans residues 26–271 (CCEPPCSAPS…SCQSSCCRPA (246 aa)).

It belongs to the KRTAP type 10 family. In terms of assembly, interacts with hair keratins. As to expression, restricted to a narrow region of the hair fiber cuticle, lying approximately 20 cell layers above the apex of the dermal papilla of the hair root; not detected in any other tissues.

In terms of biological role, in the hair cortex, hair keratin intermediate filaments are embedded in an interfilamentous matrix, consisting of hair keratin-associated proteins (KRTAP), which are essential for the formation of a rigid and resistant hair shaft through their extensive disulfide bond cross-linking with abundant cysteine residues of hair keratins. The matrix proteins include the high-sulfur and high-glycine-tyrosine keratins. This chain is Keratin-associated protein 10-11 (KRTAP10-11), found in Homo sapiens (Human).